The following is a 475-amino-acid chain: Putative F-box protein At3g58960 (475 aa).

An F-box domain is found at 1–49; sequence MDRISSLSNDIISNIVSFLSAKDAAVASVLSKRWQNIYTIVPNLEFDNT.

The protein is Putative F-box protein At3g58960 of Arabidopsis thaliana (Mouse-ear cress).